We begin with the raw amino-acid sequence, 467 residues long: Probable rhamnogalacturonase A (467 aa).

A signal peptide spans 1–19 (MHSLSLISLALLSPLLVNA). A disulfide bridge connects residues Cys40 and Cys66. The Proton donor role is filled by Asp217. A disulfide bridge connects residues Cys219 and Cys236. Residues Asn237 and Asn252 are each glycosylated (N-linked (GlcNAc...) asparagine). The active site involves His292. N-linked (GlcNAc...) asparagine glycosylation occurs at Asn319. Disulfide bonds link Cys342–Cys348 and Cys370–Cys379.

It belongs to the glycosyl hydrolase 28 family.

It is found in the secreted. It catalyses the reaction Endohydrolysis of alpha-D-GalA-(1-&gt;2)-alpha-L-Rha glycosidic bond in the rhamnogalacturonan I backbone with initial inversion of anomeric configuration releasing oligosaccharides with beta-D-GalA at the reducing end.. In terms of biological role, pectinolytic enzymes consist of four classes of enzymes: pectine lyase, polygalacturonase, pectin methylesterase and rhamnogalacturonase. Hydrolyzes alpha-D-galacturonopyranosyl-(1,2)-alpha-L-rhamnopyranosyl linkages in the backbone of the hairy regions of pectins. The sequence is that of Probable rhamnogalacturonase A (rhgA) from Aspergillus oryzae (strain ATCC 42149 / RIB 40) (Yellow koji mold).